Reading from the N-terminus, the 270-residue chain is tRNA (guanine-N(1)-)-methyltransferase (270 aa).

S-adenosyl-L-methionine-binding positions include glycine 119 and 139–144; that span reads IGDYVI.

This sequence belongs to the RNA methyltransferase TrmD family. Homodimer.

Its subcellular location is the cytoplasm. It carries out the reaction guanosine(37) in tRNA + S-adenosyl-L-methionine = N(1)-methylguanosine(37) in tRNA + S-adenosyl-L-homocysteine + H(+). In terms of biological role, specifically methylates guanosine-37 in various tRNAs. This is tRNA (guanine-N(1)-)-methyltransferase from Nitrosomonas europaea (strain ATCC 19718 / CIP 103999 / KCTC 2705 / NBRC 14298).